The sequence spans 195 residues: NAD(P)H-quinone oxidoreductase subunit J, chloroplastic (195 aa).

Belongs to the complex I 30 kDa subunit family. As to quaternary structure, NDH is composed of at least 16 different subunits, 5 of which are encoded in the nucleus.

It localises to the plastid. The protein resides in the chloroplast thylakoid membrane. The enzyme catalyses a plastoquinone + NADH + (n+1) H(+)(in) = a plastoquinol + NAD(+) + n H(+)(out). It catalyses the reaction a plastoquinone + NADPH + (n+1) H(+)(in) = a plastoquinol + NADP(+) + n H(+)(out). NDH shuttles electrons from NAD(P)H:plastoquinone, via FMN and iron-sulfur (Fe-S) centers, to quinones in the photosynthetic chain and possibly in a chloroplast respiratory chain. The immediate electron acceptor for the enzyme in this species is believed to be plastoquinone. Couples the redox reaction to proton translocation, and thus conserves the redox energy in a proton gradient. This Chlorokybus atmophyticus (Soil alga) protein is NAD(P)H-quinone oxidoreductase subunit J, chloroplastic.